Here is a 231-residue protein sequence, read N- to C-terminus: NADH-ubiquinone oxidoreductase chain 4 (231 aa).

7 helical membrane-spanning segments follow: residues 1 to 21 (PIAGSMVLAAILLKLGGYGII), 34 to 54 (MFLPFIVLALWGAILANLTCL), 63 to 85 (IAYSSISHMGLVVAAIIIQTPWG), 89 to 111 (AMALMIAHGFTSSALFCLANTTY), 128 to 148 (ILPMATTWWLLTNLMNIAIPP), 156 to 176 (LLIMSALFNWCPTTIIMLGLS), and 211 to 231 (LLMILHLIPLMMISMKPELII).

The protein belongs to the complex I subunit 4 family.

Its subcellular location is the mitochondrion membrane. The catalysed reaction is a ubiquinone + NADH + 5 H(+)(in) = a ubiquinol + NAD(+) + 4 H(+)(out). Core subunit of the mitochondrial membrane respiratory chain NADH dehydrogenase (Complex I) that is believed to belong to the minimal assembly required for catalysis. Complex I functions in the transfer of electrons from NADH to the respiratory chain. The immediate electron acceptor for the enzyme is believed to be ubiquinone. This Agkistrodon piscivorus piscivorus (Eastern cottonmouth) protein is NADH-ubiquinone oxidoreductase chain 4 (MT-ND4).